We begin with the raw amino-acid sequence, 123 residues long: Small ribosomal subunit protein uS13c (123 aa).

The interval 90-123 is disordered; sequence GKRHRNNLPVRGQRTRTNARSRRGSKKTVTGKKK. The span at 102–123 shows a compositional bias: basic residues; the sequence is QRTRTNARSRRGSKKTVTGKKK.

It belongs to the universal ribosomal protein uS13 family. As to quaternary structure, part of the 30S ribosomal subunit.

The protein localises to the plastid. It is found in the chloroplast. Its function is as follows. Located at the top of the head of the 30S subunit, it contacts several helices of the 16S rRNA. In Trieres chinensis (Marine centric diatom), this protein is Small ribosomal subunit protein uS13c.